The sequence spans 248 residues: MPPETLAYLQTLIGSLDGNARLYQTALTHRSVIGNTALSHHNESNQRLEFLGDAVLGLLISHFLFQNFPASAEGDLSKTRAKIVNSKSLACFARSIGLGEHLLLGESAAHYNIRDSESALADAFESLIGAIYLDKGLDAAYGFVDKHIIHHQSFSAIVASEQNYKSCLIEYSQAHHVAAPVYTVIAEHGAEHDKEFTVEVSCNNIKGCGTARRKKDAEQLAAKEAMERIIALQPLPHEPKDEENSTTT.

Residues 6 to 136 (LAYLQTLIGS…LIGAIYLDKG (131 aa)) form the RNase III domain. A Mg(2+)-binding site is contributed by Glu49. The active site involves Asp53. The Mg(2+) site is built by Asp122 and Glu125. Glu125 is a catalytic residue. The DRBM domain occupies 163 to 231 (NYKSCLIEYS…AKEAMERIIA (69 aa)).

This sequence belongs to the ribonuclease III family. As to quaternary structure, homodimer. It depends on Mg(2+) as a cofactor.

The protein localises to the cytoplasm. It catalyses the reaction Endonucleolytic cleavage to 5'-phosphomonoester.. Functionally, digests double-stranded RNA. Involved in the processing of primary rRNA transcript to yield the immediate precursors to the large and small rRNAs (23S and 16S). Processes some mRNAs, and tRNAs when they are encoded in the rRNA operon. Processes pre-crRNA and tracrRNA of type II CRISPR loci if present in the organism. The protein is Ribonuclease 3 of Chlorobium chlorochromatii (strain CaD3).